Reading from the N-terminus, the 515-residue chain is MLAVDTGLVEEWLSEFKTLPEASISSYATNLKDKTALISSLYKVIQEPQSELLEPVCHQLFEFYRSGEEQLLRFTLQFLPELMWCYLAVSASRDLQSSGCIEALLLGVYNLEIVDKEGHSKVLSFTIPSLSKPSVYHEPSSIGSMALTEGALSQHGLSRVVYSGPHPQREMLTAQNRFEVLTFLLLCYNAALSYMPAISLQSLCQICSRICVCGYPRQQVRKYKGVNSRIPVSSEFMVQMLTGIYYAFYNGEWDLARKAMDDVLYRAQLELYPEPLLVANAIKASLPQGAMKSSKEGTKCIQVEITPTSSRISRNAVTSMSIRGHRWKRHGNADLGIEEELIEVSETDEGFYSRAASSTSQSALSNSSNTSSKNLLGKSQRRSGGSKAAGREKEGETCREHLSRKQTQRALSENLELVSLKRLTLTTSQSLPKPGSHSLARTTTTVFSKSFEQVSGVTVANNRGGVSGTEANRFSACSLQEEKLIYGTERTDLPVLSKQPNQQRPPSISITLSTD.

Positions 358–378 are enriched in low complexity; it reads STSQSALSNSSNTSSKNLLGK. Disordered stretches follow at residues 358 to 410 and 491 to 515; these read STSQ…TQRA and TDLP…LSTD. Residues 389 to 403 are compositionally biased toward basic and acidic residues; it reads AGREKEGETCREHLS. Positions 498–515 are enriched in polar residues; that stretch reads KQPNQQRPPSISITLSTD.

Belongs to the Hyccin family. As to quaternary structure, component of a phosphatidylinositol 4-kinase (PI4K) complex.

The protein localises to the cytoplasm. Its subcellular location is the cytosol. It localises to the cell membrane. Component of a complex required to localize phosphatidylinositol 4-kinase (PI4K) to the plasma membrane. The complex acts as a regulator of phosphatidylinositol 4-phosphate (PtdIns(4)P) synthesis. The chain is Hyccin (HYCC1) from Gallus gallus (Chicken).